Reading from the N-terminus, the 256-residue chain is Protein FixA (256 aa).

This sequence belongs to the ETF beta-subunit/FixA family. As to quaternary structure, heterodimer of FixA and FixB.

Its pathway is amine and polyamine metabolism; carnitine metabolism. Required for anaerobic carnitine reduction. May bring reductant to CaiA. This chain is Protein FixA, found in Salmonella agona (strain SL483).